Reading from the N-terminus, the 423-residue chain is MSYVIDRRLNGKNKSTVNRQRFLRRYRDHIKKAVEEAVSRRSITDMEHGEQISIPGRDIDEPVLHHGRGGKQTVVHPGNKEFTAGEHIARPPGGGGGRGPGKAGNSGEGMDEFVFQITQEEFLEFMFEDLELPNLVKRNLTGTDTFKTVRAGISNEGNPSRINIIRTLRSAHARRIALSGSSRAKLREVKEELARLKREEPDNFGDIQDLEAEIERLSARIHRVPFLDTFDLKYNLLVKQPNPSSKAVMFCLMDVSGSMTQATKDIAKRFFILLYLFLKRNYDKIDVVFIRHHTSAREVDEEEFFYSRETGGTIVSSALKLMQEIMAERYPSNEWNIYAAQASDGDNWNDDSPICRDILINQIMPFVQYYTYVEITPREHQALWYEYERIAEAFSDTFAQQQLVSAGDIYPVFRELFQRRLVT.

The disordered stretch occupies residues 83 to 108 (TAGEHIARPPGGGGGRGPGKAGNSGE). The segment covering 92–107 (PGGGGGRGPGKAGNSG) has biased composition (gly residues).

This sequence belongs to the UPF0229 family.

The sequence is that of UPF0229 protein Pfl01_5140 from Pseudomonas fluorescens (strain Pf0-1).